The following is a 465-amino-acid chain: MIEQIGADSKSAENKQERKLYIETYGCQMNVADSEVVASVMQMDGYSLTDNVDEADTILVNTCSVRDNAEQKVLNRLAYYHSLRKKRRASSRLVIGVLGCMAERVKEELIREHHVDVVAGPDSYLDLPNLVGAAEQGEKAINVELSMQETYKDVMPLKMGGVHINGFVSIMRGCNNFCSYCIVPYTRGRERSREIESILNEVRDLKAKNFREVTLLGQNVNSYRYEQNGRIIRFPDLLAAVAEAVPDMRIRFTSPHPKDMDDEAIAVMARYRNICNHIHLPAQSGSDKMLRVMKRGYTRRWYLDRVAAIRRAIPDCAISSDLFCGFHSETEEDFEATLSLMEEVGYDSAFMFKYSERPGTYAARHLVDDVLEEVKLARLDRMIALQNRLSEESNKRDISKTFEVLIEGFSKRSREQLFGRTQQNKVVIFDKNGHRVGQYIYVRIKDASSATLFGEVVEAPTSEKG.

The MTTase N-terminal domain maps to 18–136; sequence RKLYIETYGC…LPNLVGAAEQ (119 aa). Residues cysteine 27, cysteine 63, cysteine 100, cysteine 174, cysteine 178, and cysteine 181 each contribute to the [4Fe-4S] cluster site. Residues 160–392 enclose the Radical SAM core domain; the sequence is GGVHINGFVS…IALQNRLSEE (233 aa). In terms of domain architecture, TRAM spans 395–458; the sequence is KRDISKTFEV…SATLFGEVVE (64 aa).

Belongs to the methylthiotransferase family. MiaB subfamily. As to quaternary structure, monomer. It depends on [4Fe-4S] cluster as a cofactor.

It is found in the cytoplasm. It carries out the reaction N(6)-dimethylallyladenosine(37) in tRNA + (sulfur carrier)-SH + AH2 + 2 S-adenosyl-L-methionine = 2-methylsulfanyl-N(6)-dimethylallyladenosine(37) in tRNA + (sulfur carrier)-H + 5'-deoxyadenosine + L-methionine + A + S-adenosyl-L-homocysteine + 2 H(+). Functionally, catalyzes the methylthiolation of N6-(dimethylallyl)adenosine (i(6)A), leading to the formation of 2-methylthio-N6-(dimethylallyl)adenosine (ms(2)i(6)A) at position 37 in tRNAs that read codons beginning with uridine. The polypeptide is tRNA-2-methylthio-N(6)-dimethylallyladenosine synthase (Porphyromonas gingivalis (strain ATCC 33277 / DSM 20709 / CIP 103683 / JCM 12257 / NCTC 11834 / 2561)).